The sequence spans 382 residues: Mannitol-1-phosphate 5-dehydrogenase (382 aa).

4 to 15 provides a ligand contact to NAD(+); it reads AVHFGAGNIGRG.

Belongs to the mannitol dehydrogenase family.

The catalysed reaction is D-mannitol 1-phosphate + NAD(+) = beta-D-fructose 6-phosphate + NADH + H(+). The chain is Mannitol-1-phosphate 5-dehydrogenase from Vibrio vulnificus (strain CMCP6).